The sequence spans 269 residues: Dihydropteroate synthase (269 aa).

Residues 14–261 enclose the Pterin-binding domain; it reads TYIMGILNFT…DVLENSRAAK (248 aa). Asn21 provides a ligand contact to Mg(2+). (7,8-dihydropterin-6-yl)methyl diphosphate is bound by residues Thr61, Asp95, Asn114, Asp178, Lys214, and 249–251; that span reads RVH.

The protein belongs to the DHPS family. It depends on Mg(2+) as a cofactor.

It carries out the reaction (7,8-dihydropterin-6-yl)methyl diphosphate + 4-aminobenzoate = 7,8-dihydropteroate + diphosphate. It participates in cofactor biosynthesis; tetrahydrofolate biosynthesis; 7,8-dihydrofolate from 2-amino-4-hydroxy-6-hydroxymethyl-7,8-dihydropteridine diphosphate and 4-aminobenzoate: step 1/2. Catalyzes the condensation of para-aminobenzoate (pABA) with 6-hydroxymethyl-7,8-dihydropterin diphosphate (DHPt-PP) to form 7,8-dihydropteroate (H2Pte), the immediate precursor of folate derivatives. The polypeptide is Dihydropteroate synthase (Clostridium beijerinckii (strain ATCC 51743 / NCIMB 8052) (Clostridium acetobutylicum)).